Here is a 421-residue protein sequence, read N- to C-terminus: O-glycosyltransferase braB (421 aa).

A disordered region spans residues 1-26 (MVPSVMEGAPQLGITSTDTSSAGVPP). Residues 13-22 (GITSTDTSSA) are compositionally biased toward polar residues.

The protein belongs to the afumC glycosyltransferase family.

Its pathway is secondary metabolite biosynthesis. In terms of biological role, O-glycosyltransferase; part of the gene cluster that mediates the biosynthesis of the brasilane terpene glycosides brasilane D and E. The biosynthesis starts with the activity of the terpene cyclase braA that converts farnesyl pyrophosphate into the sesquiterpene alcohol trichobrasilenol. Subsequently, trichobrasilenol is glycosylated by the O-glycosyltransferase braB putatively using UDP-GlcNAc as sugar donor to yield brasilane A. The latter then undergoes two rounds of oxidation performed by the cytochrome P450 monooxygenase braC. In the first round braC hydroxylates C-12 forming brasilane D, which serves as substrate in the second round to establish the epoxide at the bond between C-5 and C-10 and oxidize the alcohol at C-12 to an aldehyde leading to the final product brasilane E. BraB is also able to glycosylate geraniol, linalool, perillyl alcohol, 3,4-dichlorophenol and, to a lesser extend, benzyl alcohol. The chain is O-glycosyltransferase braB from Annulohypoxylon truncatum (Hypoxylon truncatum).